The primary structure comprises 295 residues: Ribosomal protein L11 methyltransferase (295 aa).

S-adenosyl-L-methionine is bound by residues Thr-146, Gly-167, Asp-189, and Asn-231.

The protein belongs to the methyltransferase superfamily. PrmA family.

It is found in the cytoplasm. The catalysed reaction is L-lysyl-[protein] + 3 S-adenosyl-L-methionine = N(6),N(6),N(6)-trimethyl-L-lysyl-[protein] + 3 S-adenosyl-L-homocysteine + 3 H(+). In terms of biological role, methylates ribosomal protein L11. The polypeptide is Ribosomal protein L11 methyltransferase (Vibrio cholerae serotype O1 (strain M66-2)).